The primary structure comprises 647 residues: 1-deoxy-D-xylulose-5-phosphate synthase (647 aa).

Thiamine diphosphate-binding positions include histidine 74 and 115-117 (GHS). A Mg(2+)-binding site is contributed by aspartate 146. Thiamine diphosphate is bound by residues 147–148 (GA), asparagine 175, tyrosine 286, and glutamate 367. Asparagine 175 contributes to the Mg(2+) binding site.

The protein belongs to the transketolase family. DXPS subfamily. As to quaternary structure, homodimer. The cofactor is Mg(2+). Thiamine diphosphate is required as a cofactor.

The enzyme catalyses D-glyceraldehyde 3-phosphate + pyruvate + H(+) = 1-deoxy-D-xylulose 5-phosphate + CO2. It functions in the pathway metabolic intermediate biosynthesis; 1-deoxy-D-xylulose 5-phosphate biosynthesis; 1-deoxy-D-xylulose 5-phosphate from D-glyceraldehyde 3-phosphate and pyruvate: step 1/1. Its function is as follows. Catalyzes the acyloin condensation reaction between C atoms 2 and 3 of pyruvate and glyceraldehyde 3-phosphate to yield 1-deoxy-D-xylulose-5-phosphate (DXP). This chain is 1-deoxy-D-xylulose-5-phosphate synthase, found in Heliobacterium modesticaldum (strain ATCC 51547 / Ice1).